Consider the following 184-residue polypeptide: NADH-quinone oxidoreductase subunit B (184 aa).

Cys-63, Cys-64, Cys-128, and Cys-158 together coordinate [4Fe-4S] cluster.

This sequence belongs to the complex I 20 kDa subunit family. As to quaternary structure, NDH-1 is composed of 14 different subunits. Subunits NuoB, C, D, E, F, and G constitute the peripheral sector of the complex. It depends on [4Fe-4S] cluster as a cofactor.

It is found in the cell inner membrane. The catalysed reaction is a quinone + NADH + 5 H(+)(in) = a quinol + NAD(+) + 4 H(+)(out). In terms of biological role, NDH-1 shuttles electrons from NADH, via FMN and iron-sulfur (Fe-S) centers, to quinones in the respiratory chain. Couples the redox reaction to proton translocation (for every two electrons transferred, four hydrogen ions are translocated across the cytoplasmic membrane), and thus conserves the redox energy in a proton gradient. The chain is NADH-quinone oxidoreductase subunit B from Xylella fastidiosa (strain 9a5c).